A 215-amino-acid polypeptide reads, in one-letter code: T-complex protein 10A homolog 1 (215 aa).

The interval 1 to 25 (MLAGQLEARDPKEGTHPEDPCPGAG) is disordered. A compositionally biased stretch (basic and acidic residues) spans 7 to 19 (EARDPKEGTHPED). Residues 69–110 (ADVHGKLRSHIDALREQNMELREKLRALQLQRWKARKKSAAS) are a coiled coil. The interval 75–96 (LRSHIDALREQNMELREKLRAL) is leucine-zipper. Positions 150 to 163 (ATLLGQRSSSNNSA) are enriched in polar residues. The interval 150–215 (ATLLGQRSSS…TPCAERRGGV (66 aa)) is disordered.

It belongs to the TCP10 family. As to quaternary structure, self-associates (via leucine zipper). Interacts (via leucine zipper) with ZIPK/DAPK3 (via leucine zipper). Interacts with MAD4. As to expression, expressed in liver and testis. Expressed in the seminiferous tubules (at protein level).

It is found in the nucleus. Functionally, may be involved in transcriptional regulation. Has in vitro transcription inhibition activity. Acts as a tumor suppressor in hepatocellular carcinoma (HCC) cells. The chain is T-complex protein 10A homolog 1 (TCP10L) from Homo sapiens (Human).